Consider the following 33-residue polypeptide: Phospholipase A2 homolog BmarPLA2 (33 aa).

It belongs to the phospholipase A2 family. Group II subfamily. K49 sub-subfamily. As to quaternary structure, homodimer; non-covalently linked. Expressed by the venom gland.

It localises to the secreted. Its function is as follows. Snake phospholipase A2 homolog that lacks enzymatic activity. May display myotoxin activity. In isolated heart decreases cardiac frequency. Also decreases mean arterial pressure. Does not show antimicrobial activity. Does not change renal parameters (such as perfusion pressure, renal vascular resistance, urinary flow, glomerular filtration rate and sodium tubular transport). The sequence is that of Phospholipase A2 homolog BmarPLA2 from Bothrops marajoensis (Marajo lancehead).